A 246-amino-acid polypeptide reads, in one-letter code: Phosducin (246 aa).

The segment covering 1–14 (MEEAKSQSLEEDFE) has biased composition (acidic residues). The disordered stretch occupies residues 1–70 (MEEAKSQSLE…GKDSKERVSR (70 aa)). Residues 1 to 244 (MEEAKSQSLE…LEHTKIEEED (244 aa)) enclose the Phosducin domain. A compositionally biased stretch (basic and acidic residues) spans 60–69 (NGKDSKERVS). Phosphoserine; by PKA is present on Ser73. The segment at 111 to 246 (YGFVYELETG…HTKIEEEDVE (136 aa)) is thioredoxin fold.

Belongs to the phosducin family. As to quaternary structure, forms a complex with the beta and gamma subunits of the GTP-binding protein, transducin. Interacts with CRX. Post-translationally, light-induced changes in cyclic nucleotide levels modulate the phosphorylation of this protein by cAMP kinase.

Its subcellular location is the cytoplasm. The protein resides in the cytosol. The protein localises to the nucleus. It is found in the cell projection. It localises to the cilium. Its subcellular location is the photoreceptor outer segment. The protein resides in the photoreceptor inner segment. Functionally, may participate in the regulation of visual phototransduction or in the integration of photoreceptor metabolism. Inhibits the transcriptional activation activity of the cone-rod homeobox CRX. The protein is Phosducin (PDC) of Homo sapiens (Human).